A 220-amino-acid polypeptide reads, in one-letter code: Deoxyribose-phosphate aldolase (220 aa).

The active-site Proton donor/acceptor is the Asp-89. Lys-151 serves as the catalytic Schiff-base intermediate with acetaldehyde. Catalysis depends on Lys-180, which acts as the Proton donor/acceptor.

It belongs to the DeoC/FbaB aldolase family. DeoC type 1 subfamily.

The protein localises to the cytoplasm. It carries out the reaction 2-deoxy-D-ribose 5-phosphate = D-glyceraldehyde 3-phosphate + acetaldehyde. Its pathway is carbohydrate degradation; 2-deoxy-D-ribose 1-phosphate degradation; D-glyceraldehyde 3-phosphate and acetaldehyde from 2-deoxy-alpha-D-ribose 1-phosphate: step 2/2. In terms of biological role, catalyzes a reversible aldol reaction between acetaldehyde and D-glyceraldehyde 3-phosphate to generate 2-deoxy-D-ribose 5-phosphate. This chain is Deoxyribose-phosphate aldolase, found in Streptococcus suis (strain 98HAH33).